Here is a 503-residue protein sequence, read N- to C-terminus: UDP-N-acetylmuramate--L-alanine ligase (503 aa).

Gly-120–Ser-126 is a binding site for ATP.

Belongs to the MurCDEF family.

It localises to the cytoplasm. The enzyme catalyses UDP-N-acetyl-alpha-D-muramate + L-alanine + ATP = UDP-N-acetyl-alpha-D-muramoyl-L-alanine + ADP + phosphate + H(+). Its pathway is cell wall biogenesis; peptidoglycan biosynthesis. Cell wall formation. The polypeptide is UDP-N-acetylmuramate--L-alanine ligase (Rhodococcus jostii (strain RHA1)).